The primary structure comprises 250 residues: Silencing boundary-establishment protein FUB1 (250 aa).

Residues proline 179 to isoleucine 250 are disordered. Over residues proline 202 to methionine 213 the composition is skewed to basic and acidic residues. Positions proline 229–isoleucine 250 are enriched in gly residues.

This sequence belongs to the proteasome inhibitor PI31 family. Interacts with the 20S proteasome.

Plays a role in the establishment of transcriptional silencing boundaries, preventing the propagation of heterochromatic silencing. The protein is Silencing boundary-establishment protein FUB1 of Saccharomyces cerevisiae (strain ATCC 204508 / S288c) (Baker's yeast).